Here is a 36-residue protein sequence, read N- to C-terminus: Potassium channel toxin alpha-KTx 16.1 (36 aa).

3 disulfide bridges follow: Cys-7–Cys-28, Cys-13–Cys-33, and Cys-17–Cys-35.

Belongs to the short scorpion toxin superfamily. Potassium channel inhibitor family. Alpha-KTx 16 subfamily. Expressed by the venom gland.

Its subcellular location is the secreted. Blocks calcium-activated potassium channels. This chain is Potassium channel toxin alpha-KTx 16.1, found in Hottentotta tamulus (Eastern Indian scorpion).